We begin with the raw amino-acid sequence, 103 residues long: Small ubiquitin-related modifier 3 (103 aa).

Residues Lys5 and Lys7 each participate in a glycyl lysine isopeptide (Lys-Gly) (interchain with G-Cter in SUMO2) cross-link. Residue Lys11 forms a Glycyl lysine isopeptide (Lys-Gly) (interchain with G-Cter in SUMO); alternate linkage. Lys11 is covalently cross-linked (Glycyl lysine isopeptide (Lys-Gly) (interchain with G-Cter in SUMO2); alternate). The Ubiquitin-like domain maps to 15–92 (DHINLKVAGQ…IDVFQQQTGG (78 aa)). Residue Gly92 forms a Glycyl lysine isopeptide (Gly-Lys) (interchain with K-? in acceptor proteins) linkage. Positions 93-103 (VPESSLAGHSF) are excised as a propeptide.

The protein belongs to the ubiquitin family. SUMO subfamily. Covalently attached to a number of proteins. Interacts with BMAL1. Interacts with USP25 (via ts SIM domain); the interaction sumoylates USP25 and inhibits its ubiquitin hydrolyzing activity. Interacts with SAE2 and UBE2I. Polymeric chains can be formed through Lys-11 cross-linking. Post-translationally, cleavage of precursor form by SENP1, SENP2 or SENP5 is necessary for function. In terms of tissue distribution, expressed predominantly in liver.

The protein localises to the cytoplasm. The protein resides in the nucleus. It localises to the PML body. Ubiquitin-like protein which can be covalently attached to target lysines either as a monomer or as a lysine-linked polymer. Does not seem to be involved in protein degradation and may function as an antagonist of ubiquitin in the degradation process. Plays a role in a number of cellular processes such as nuclear transport, DNA replication and repair, mitosis and signal transduction. Covalent attachment to its substrates requires prior activation by the E1 complex SAE1-SAE2 and linkage to the E2 enzyme UBE2I, and can be promoted by an E3 ligase such as PIAS1-4, RANBP2 or CBX4. Plays a role in the regulation of sumoylation status of SETX. The sequence is that of Small ubiquitin-related modifier 3 from Homo sapiens (Human).